The chain runs to 920 residues: Zinc finger MIZ domain-containing protein 2 (920 aa).

2 disordered regions span residues 1–22 (MNSM…GSFA) and 54–79 (SQVL…VAGG). Residues 60-79 (PMGPAGSPSGSSMMPGVAGG) are compositionally biased toward low complexity. R111 is subject to Omega-N-methylarginine. 2 disordered regions span residues 243–265 (GQRL…RQGV) and 286–391 (PSTA…SPNQ). R245 and R262 each carry asymmetric dimethylarginine. Pro residues predominate over residues 295–304 (PGQPPAPSPS). The segment covering 334-354 (EQFNGQGASFNGGSVSYSQPG) has biased composition (polar residues). The span at 366-379 (PSSPLPGNPTPPMT) shows a compositional bias: pro residues. The span at 380–389 (PSSSVPYMSP) shows a compositional bias: low complexity. Glycyl lysine isopeptide (Lys-Gly) (interchain with G-Cter in SUMO2) cross-links involve residues K402 and K457. The tract at residues 435 to 506 (PFRLQHNLAV…TIERGDNKTS (72 aa)) is interaction with AR. The segment at 585 to 671 (GEDGVEQTAI…IYIQNSDYEE (87 aa)) adopts an SP-RING-type zinc-finger fold. Zn(2+)-binding residues include C616, H618, C639, and C642. Residue K692 forms a Glycyl lysine isopeptide (Lys-Gly) (interchain with G-Cter in SUMO2) linkage. The segment at 803-920 (SQMAPAGHLD…DDLLSLFENN (118 aa)) is disordered. Residues 876-890 (AGEAPEPALDLLPEL) are compositionally biased toward low complexity. Positions 906-920 (PTNNNDDLLSLFENN) are enriched in polar residues.

In terms of assembly, interacts with AR, SMARCA4/BRG1 and SMARCE1/BAF57. Interaction with either SMARCA4 and SMARCE1 enhances AR-mediated transcription. In terms of tissue distribution, expressed most abundantly in testis with lower levels in heart, brain, pancreas, prostate and ovary.

The protein localises to the nucleus. In terms of biological role, increases ligand-dependent transcriptional activity of AR and other nuclear hormone receptors. This chain is Zinc finger MIZ domain-containing protein 2 (ZMIZ2), found in Homo sapiens (Human).